A 354-amino-acid polypeptide reads, in one-letter code: 3-dehydroquinate synthase (354 aa).

Residues 106–110, 130–131, K143, and K152 contribute to the NAD(+) site; these read GVIGD and TS. Zn(2+) contacts are provided by E185, H246, and H262.

This sequence belongs to the sugar phosphate cyclases superfamily. Dehydroquinate synthase family. Co(2+) serves as cofactor. The cofactor is Zn(2+). NAD(+) is required as a cofactor.

The protein resides in the cytoplasm. It carries out the reaction 7-phospho-2-dehydro-3-deoxy-D-arabino-heptonate = 3-dehydroquinate + phosphate. It functions in the pathway metabolic intermediate biosynthesis; chorismate biosynthesis; chorismate from D-erythrose 4-phosphate and phosphoenolpyruvate: step 2/7. Its function is as follows. Catalyzes the conversion of 3-deoxy-D-arabino-heptulosonate 7-phosphate (DAHP) to dehydroquinate (DHQ). The polypeptide is 3-dehydroquinate synthase (Leuconostoc mesenteroides subsp. mesenteroides (strain ATCC 8293 / DSM 20343 / BCRC 11652 / CCM 1803 / JCM 6124 / NCDO 523 / NBRC 100496 / NCIMB 8023 / NCTC 12954 / NRRL B-1118 / 37Y)).